A 206-amino-acid chain; its full sequence is Transmembrane emp24 domain-containing protein bai (206 aa).

A signal peptide spans 1 to 20 (MMKAILATLAIFGCIWPGQS). The Lumenal portion of the chain corresponds to 21-172 (VMFHLTPNTQ…RDTNEKTNSR (152 aa)). Residues 30-140 (QKCLKEDIQA…LKPLEVDLKR (111 aa)) enclose the GOLD domain. Residues 173-193 (VLFFSIFSMCCLLGLATWQVL) form a helical membrane-spanning segment. The Cytoplasmic portion of the chain corresponds to 194–206 (YLRRYFKAKKLIE).

The protein belongs to the EMP24/GP25L family.

Its subcellular location is the membrane. Its function is as follows. Eca and bai are essential, though not redundant, for dorsoventral patterning of the embryo. Specifically required during early embryogenesis for the activity of maternal tkv, while the zygotic tkv is not affected. The sequence is that of Transmembrane emp24 domain-containing protein bai from Drosophila willistoni (Fruit fly).